Here is a 370-residue protein sequence, read N- to C-terminus: Aminomethyltransferase (370 aa).

The protein belongs to the GcvT family. As to quaternary structure, the glycine cleavage system is composed of four proteins: P, T, L and H.

It carries out the reaction N(6)-[(R)-S(8)-aminomethyldihydrolipoyl]-L-lysyl-[protein] + (6S)-5,6,7,8-tetrahydrofolate = N(6)-[(R)-dihydrolipoyl]-L-lysyl-[protein] + (6R)-5,10-methylene-5,6,7,8-tetrahydrofolate + NH4(+). Functionally, the glycine cleavage system catalyzes the degradation of glycine. The polypeptide is Aminomethyltransferase (Prochlorococcus marinus (strain MIT 9301)).